A 200-amino-acid polypeptide reads, in one-letter code: Dual-action ribosomal maturation protein DarP (200 aa).

Disordered stretches follow at residues 1-25 (MTRK…DRPS) and 177-200 (TASG…DDEA). The span at 12-25 (HAAEVDDNGYDRPS) shows a compositional bias: basic and acidic residues. Acidic residues predominate over residues 184-200 (GDDEAADEAGDDHDDEA).

It belongs to the DarP family.

It localises to the cytoplasm. In terms of biological role, member of a network of 50S ribosomal subunit biogenesis factors which assembles along the 30S-50S interface, preventing incorrect 23S rRNA structures from forming. Promotes peptidyl transferase center (PTC) maturation. The protein is Dual-action ribosomal maturation protein DarP of Burkholderia ambifaria (strain MC40-6).